We begin with the raw amino-acid sequence, 42 residues long: Photosystem I reaction center subunit IX (42 aa).

Residues 7–27 (YLSTAPVLAALSLGFLAGLLI) traverse the membrane as a helical segment.

It belongs to the PsaJ family.

It localises to the plastid. Its subcellular location is the chloroplast thylakoid membrane. Functionally, may help in the organization of the PsaE and PsaF subunits. This Cryptomeria japonica (Japanese cedar) protein is Photosystem I reaction center subunit IX.